Consider the following 171-residue polypeptide: Phosphopantetheine adenylyltransferase (171 aa).

Threonine 10 serves as a coordination point for substrate. Residues 10-11 (TF) and histidine 18 each bind ATP. Substrate-binding residues include lysine 42, threonine 74, and arginine 88. ATP-binding positions include 89-91 (GLR), glutamate 99, and 124-130 (WACLSSK).

Belongs to the bacterial CoaD family. Homohexamer. The cofactor is Mg(2+).

The protein resides in the cytoplasm. It catalyses the reaction (R)-4'-phosphopantetheine + ATP + H(+) = 3'-dephospho-CoA + diphosphate. The protein operates within cofactor biosynthesis; coenzyme A biosynthesis; CoA from (R)-pantothenate: step 4/5. Its function is as follows. Reversibly transfers an adenylyl group from ATP to 4'-phosphopantetheine, yielding dephospho-CoA (dPCoA) and pyrophosphate. The sequence is that of Phosphopantetheine adenylyltransferase from Blochmanniella pennsylvanica (strain BPEN).